A 198-amino-acid polypeptide reads, in one-letter code: GTP-binding protein Di-Ras1 (198 aa).

Residues 17–22, 33–39, 61–65, 121–125, A151, and 151–152 contribute to the GTP site; these read GVGKSS, RDTYIPT, DTTGS, NKCDE, and AK. The Effector region signature appears at 36-44; that stretch reads YIPTIEDTY. Cysteine methyl ester is present on C195. C195 carries the S-geranylgeranyl cysteine lipid modification. A propeptide spans 196 to 198 (removed in mature form); sequence ALM.

The protein belongs to the small GTPase superfamily. Di-Ras family.

The protein localises to the cell membrane. Displays low GTPase activity and exists predominantly in the GTP-bound form. The protein is GTP-binding protein Di-Ras1 (Diras1) of Mus musculus (Mouse).